We begin with the raw amino-acid sequence, 60 residues long: MDHRLLEIIACPVCNGKLYFNQEKQELICKADRLAFPLRDGIPVLLENEARALTAEETNP.

It belongs to the UPF0434 family.

In Cronobacter sakazakii (strain ATCC BAA-894) (Enterobacter sakazakii), this protein is UPF0434 protein ESA_02427.